Consider the following 459-residue polypeptide: FBD-associated F-box protein At4g13985 (459 aa).

Positions 18-64 constitute an F-box domain; sequence VDRLRNLPDCLLFKILLNLPTKDVVKLSVLSRRWRNVWRYVPGLDLE. In terms of domain architecture, FBD spans 375 to 429; the sequence is KEGANILPGPRRFLTSLEYVKIAKPMAAEASEIKLKLVSYFLENSTILKKLTLCL.

The protein is FBD-associated F-box protein At4g13985 of Arabidopsis thaliana (Mouse-ear cress).